The sequence spans 858 residues: Neural cell adhesion molecule 1 (858 aa).

The signal sequence occupies residues 1-19 (MLRTKDLIWTLFFLGTAVS). 5 consecutive Ig-like C2-type domains span residues 20–111 (LQVD…ATVN), 116–205 (QKLM…KDIQ), 212–302 (PTVQ…ASIH), 309–414 (PKIT…LEVQ), and 417–502 (PKLQ…ESLE). Residues 20 to 721 (LQVDIVPSQG…NGSPTAGLST (702 aa)) are Extracellular-facing. 2 disulfides stabilise this stretch: C41/C96 and C139/C189. Residues 152-156 (KHKGR) and 161-165 (KKDVR) contribute to the heparin site. N222 carries an N-linked (GlcNAc...) asparagine glycan. A disulfide bond links C235 and C288. Residues N316, N348, N434, N460, and N489 are each glycosylated (N-linked (GlcNAc...) asparagine). Cysteines 330 and 396 form a disulfide. The cysteines at positions 437 and 490 are disulfide-linked. Fibronectin type-III domains are found at residues 510 to 609 (TPSS…TQPV) and 611 to 706 (EPSA…SAQP). A helical membrane pass occupies residues 722 to 739 (GAIVGILIVIFVLLLVVM). Topologically, residues 740-858 (DITCYFLNKC…TQTKENESKA (119 aa)) are cytoplasmic. Residues 765 to 858 (PGAKGKDMEE…TQTKENESKA (94 aa)) form a disordered region. Basic and acidic residues-rich tracts occupy residues 768 to 809 (KGKD…HTEP) and 817 to 834 (EPEK…ESEA). A phosphoserine mark is found at S780 and S784.

In terms of assembly, interacts with MDK. Found in a complex with SLC39A6, SLC39A10 and with NCAM1; this complex controls NCAM1 phosphorylation and integration into focal adhesion complexes during epithelial-tomesenchymal transition. Interacts with synaptic plasticity regulator PANTS. Post-translationally, polysialylated by ST8SIA2 and ST8SIA4. Polysialylation modulates cell interactions by confering both attractive and repulsive properties that are highly regulated by ST8SIA2 and ST8SIA4. Polysialylation is formed on a-2,3-linked sialic acid of core glycans.

It is found in the cell membrane. Its function is as follows. This protein is a cell adhesion molecule involved in neuron-neuron adhesion, neurite fasciculation, outgrowth of neurites, etc. This is Neural cell adhesion molecule 1 from Rattus norvegicus (Rat).